Reading from the N-terminus, the 166-residue chain is Phospholipase A2 inhibitor clone 02/03/06/07 (166 aa).

The first 19 residues, 1–19 (MRLILLSGLLLLGTFLANG), serve as a signal peptide directing secretion. A C-type lectin domain is found at 46 to 161 (LKHAFLTVHK…CDDNLLVVCE (116 aa)). 2 disulfides stabilise this stretch: cysteine 83–cysteine 160 and cysteine 138–cysteine 152. An N-linked (GlcNAc...) asparagine glycan is attached at asparagine 122.

The protein belongs to the alpha-type phospholipase A2 inhibitor family. As to quaternary structure, homotrimer; non-covalently linked. In terms of tissue distribution, expressed by the liver.

It localises to the secreted. Functionally, this phospholipase A2 inhibitor binds directly phospholipase A2 in the presence or absence of calcium. The polypeptide is Phospholipase A2 inhibitor clone 02/03/06/07 (Lachesis muta muta (Bushmaster)).